The following is a 437-amino-acid chain: Adenylosuccinate synthetase (437 aa).

GTP contacts are provided by residues 25–31 (GDEGKGK), 53–55 (GHT), and lysine 62. The active-site Proton acceptor is the aspartate 26. Positions 26 and 53 each coordinate Mg(2+). IMP is bound by residues 26 to 29 (DEGK) and 51 to 54 (NAGH). Histidine 54 functions as the Proton donor in the catalytic mechanism. Threonine 141, arginine 155, asparagine 232, and threonine 247 together coordinate IMP. GTP is bound at residue threonine 307. Residue 307-313 (TTTKRPR) coordinates substrate. Arginine 311 provides a ligand contact to IMP. GTP is bound by residues arginine 313, 339–341 (KLD), and 425–427 (GIG).

This sequence belongs to the adenylosuccinate synthetase family. As to quaternary structure, homodimer. The cofactor is Mg(2+).

The protein localises to the cytoplasm. It carries out the reaction IMP + L-aspartate + GTP = N(6)-(1,2-dicarboxyethyl)-AMP + GDP + phosphate + 2 H(+). Its pathway is purine metabolism; AMP biosynthesis via de novo pathway; AMP from IMP: step 1/2. In terms of biological role, plays an important role in the salvage pathway for purine nucleotide biosynthesis. Catalyzes the first committed step in the biosynthesis of AMP from IMP. In Plasmodium vivax (strain Salvador I), this protein is Adenylosuccinate synthetase.